The primary structure comprises 126 residues: Small ribosomal subunit protein uS13 (126 aa).

The interval 94–126 (GLPVRGQKTRNNAHTVKGKPKAAIAGKKKNKVN) is disordered. Residues 109–126 (VKGKPKAAIAGKKKNKVN) show a composition bias toward basic residues.

This sequence belongs to the universal ribosomal protein uS13 family. As to quaternary structure, part of the 30S ribosomal subunit. Forms a loose heterodimer with protein S19. Forms two bridges to the 50S subunit in the 70S ribosome.

In terms of biological role, located at the top of the head of the 30S subunit, it contacts several helices of the 16S rRNA. In the 70S ribosome it contacts the 23S rRNA (bridge B1a) and protein L5 of the 50S subunit (bridge B1b), connecting the 2 subunits; these bridges are implicated in subunit movement. Contacts the tRNAs in the A and P-sites. The chain is Small ribosomal subunit protein uS13 from Aster yellows witches'-broom phytoplasma (strain AYWB).